The following is a 450-amino-acid chain: Vimentin beta (450 aa).

A head region spans residues 1–81; the sequence is MSSRTSTSSY…FGLADAINTE (81 aa). Over residues 24–38 the composition is skewed to polar residues; that stretch reads STYSSRQYSSPGRTT. The tract at residues 24–56 is disordered; it reads STYSSRQYSSPGRTTSRVSYSSASSTSPSLYMS. Low complexity predominate over residues 39–56; sequence SRVSYSSASSTSPSLYMS. Positions 82–117 are coil 1A; sequence FKANRTNEKAEMQHVNDRFASYIEEVRFLEQQNKIL. Residues 89–397 form the IF rod domain; sequence EKAEMQHVND…NLLEGEEYRI (309 aa). The interval 118-139 is linker 1; that stretch reads TAELEQMRGKGSSRVGDLYEDE. The tract at residues 140-231 is coil 1B; the sequence is MRELRRQVDQ…KLHDEELAEL (92 aa). Positions 232–254 are linker 12; the sequence is QMQIQERHVQIDMEVAKPDLTAA. The interval 255 to 393 is coil 2; the sequence is LRDVRQQYET…ATYRNLLEGE (139 aa). The tail stretch occupies residues 394 to 450; that stretch reads EYRITTPFPNLSSLSLRESMKEIRPAMDSLSKKVVIKTIETRDGHIINQSTQKDNLE.

It belongs to the intermediate filament family. Homomer. In terms of processing, one of the most prominent phosphoproteins in various cells of mesenchymal origin. Phosphorylation is enhanced during cell division, at which time vimentin filaments are significantly reorganized. In terms of tissue distribution, expressed in low amounts in retina, optic nerve, brain, and spinal cord and in very high amounts in eye lens.

Its function is as follows. Vimentins are class-III intermediate filaments found in various non-epithelial cells, especially mesenchymal cells. Vimentin is attached to the nucleus, endoplasmic reticulum, and mitochondria, either laterally or terminally. This chain is Vimentin beta, found in Carassius auratus (Goldfish).